A 426-amino-acid polypeptide reads, in one-letter code: Tol-Pal system protein TolB (426 aa).

Positions 1–24 are cleaved as a signal peptide; sequence MKLKSRFTSIIGVITLFFSQTVTA.

Belongs to the TolB family. As to quaternary structure, the Tol-Pal system is composed of five core proteins: the inner membrane proteins TolA, TolQ and TolR, the periplasmic protein TolB and the outer membrane protein Pal. They form a network linking the inner and outer membranes and the peptidoglycan layer.

It localises to the periplasm. Part of the Tol-Pal system, which plays a role in outer membrane invagination during cell division and is important for maintaining outer membrane integrity. The sequence is that of Tol-Pal system protein TolB from Actinobacillus pleuropneumoniae serotype 5b (strain L20).